A 155-amino-acid chain; its full sequence is FUN14 domain-containing protein 1 (155 aa).

Residues 1-47 (MATRNPPPQEYESDDDSYEVLDLTEYARRHHWWNRVFGHSSGPMVEK) are Cytoplasmic-facing. 2 positions are modified to phosphoserine: Ser13 and Ser17. Tyr18 is modified (phosphotyrosine; by SRC). Positions 18–21 (YEVL) match the YXXL motif. The chain crosses the membrane as a helical span at residues 48–68 (YSVATQIVMGGVSGWCAGFLF). Over 69 to 74 (QKVGKL) the chain is Mitochondrial intermembrane. Residues 75–95 (AATAVGGGFLLLQIASHSGYV) traverse the membrane as a helical segment. Residues 96-133 (QIDWKRVEKDVNKAKRQIKKRANKAAPEINNIIEEATE) lie on the Cytoplasmic side of the membrane. Residue Lys119 forms a Glycyl lysine isopeptide (Lys-Gly) (interchain with G-Cter in ubiquitin) linkage. Residues 134-154 (FVKQNIVISSGFVGGFLLGLA) form a helical membrane-spanning segment. A topological domain (mitochondrial intermembrane) is located at residue Ser155.

The protein belongs to the FUN14 family. In terms of assembly, interacts (via YXXL motif) with MAP1 LC3 family proteins MAP1LC3A, MAP1LC3B and GABARAP. Interacts with DNM1L/DPR1. Interacts with GPX4. In terms of processing, phosphorylation at Ser-13 by CK2 and at Tyr-18 by SRC inhibits activation of mitophagy. Following hypoxia, dephosphorylated at Tyr-18, leading to interaction with MAP1 LC3 family proteins and triggering mitophagy. Dephosphorylation is mediated by PGAM5. Phosphorylated by ULK1 at Ser-17 which enhances FUNDC1 binding to LC3. Post-translationally, ubiquitinated on Lys-119. Deubiquitinated by USP19; leading to hypoxia-induced DRP1 oligomerization and GTPase activity.

The protein localises to the mitochondrion outer membrane. In terms of biological role, integral mitochondrial outer-membrane protein that mediates the formation of mitochondria-associated endoplasmic reticulum membranes (MAMs). In turn, mediates angiogenesis and neoangiogenesis through interference with intracellular Ca(2+) communication and regulation of the vascular endothelial growth factor receptor KDR/VEGFR2 expression at both mRNA and protein levels. Also acts as an activator of hypoxia-induced mitophagy, an important mechanism for mitochondrial quality and homeostasis, by interacting with and recruiting LC3 protein family to mitochondria. Mechanistically, recruits DRP1 at ER-mitochondria contact sites leading to DRP1 oligomerization and GTPase activity to facilitate mitochondrial fission during hypoxia. Additionally, plays a role in hepatic ferroptosis by interacting directly with glutathione peroxidase/GPX4 to facilitate its recruitment into mitochondria through TOM/TIM complex where it is degraded by mitophagy. This Bos taurus (Bovine) protein is FUN14 domain-containing protein 1 (FUNDC1).